The chain runs to 187 residues: MKTVYVTGYKSFELNIFKDDAPEVYYLKAFIKHKLLQYIDEGLEWVLIQGQLGIELWTAEVVIDLRVEYPDLKLGIITPFYGHTSKWNEQNQMKYNKIAQEADFMESVHHTEYEGPFQFKQTDQFMLDHTDMTILIYDEEQEGSPKFFKRMLVDFINKTNYTCDIVAFDELTDFINDMQWEQDQSFE.

Belongs to the UPF0398 family.

The polypeptide is UPF0398 protein SH1465 (Staphylococcus haemolyticus (strain JCSC1435)).